Consider the following 95-residue polypeptide: Small ribosomal subunit protein uS19 (95 aa).

The tract at residues 76-95 (PTRTFRGHGGKKADKRGKLK) is disordered. Over residues 80 to 95 (FRGHGGKKADKRGKLK) the composition is skewed to basic residues.

Belongs to the universal ribosomal protein uS19 family.

Its function is as follows. Protein S19 forms a complex with S13 that binds strongly to the 16S ribosomal RNA. The protein is Small ribosomal subunit protein uS19 of Herpetosiphon aurantiacus (strain ATCC 23779 / DSM 785 / 114-95).